The chain runs to 475 residues: Sulfate adenylyltransferase subunit 1 (475 aa).

In terms of domain architecture, tr-type G spans 25–239 (KSLLRFLTCG…EVLETVEIQR (215 aa)). The tract at residues 34 to 41 (GSVDDGKS) is G1. 34-41 (GSVDDGKS) is a binding site for GTP. Residues 92-96 (GITID) are G2. The interval 113-116 (DTPG) is G3. GTP-binding positions include 113 to 117 (DTPGH) and 168 to 171 (NKMD). The tract at residues 168–171 (NKMD) is G4. The interval 206–208 (SAL) is G5.

The protein belongs to the TRAFAC class translation factor GTPase superfamily. Classic translation factor GTPase family. CysN/NodQ subfamily. In terms of assembly, heterodimer composed of CysD, the smaller subunit, and CysN.

The catalysed reaction is sulfate + ATP + H(+) = adenosine 5'-phosphosulfate + diphosphate. It functions in the pathway sulfur metabolism; hydrogen sulfide biosynthesis; sulfite from sulfate: step 1/3. Functionally, with CysD forms the ATP sulfurylase (ATPS) that catalyzes the adenylation of sulfate producing adenosine 5'-phosphosulfate (APS) and diphosphate, the first enzymatic step in sulfur assimilation pathway. APS synthesis involves the formation of a high-energy phosphoric-sulfuric acid anhydride bond driven by GTP hydrolysis by CysN coupled to ATP hydrolysis by CysD. This Shigella flexneri protein is Sulfate adenylyltransferase subunit 1.